The primary structure comprises 1843 residues: MKEPDDQDTSDGGRSGSRNEGKLAHKSILKSSQDTTADSYTDGEESYLGDDLDLDDMDESSHSSQEYVQAPAPSQEPPVEVKEEPEADVKKVLSETFYYDYPELVSIPYVSSEERIPLYFLTLNHSFGYDCRKRANLQLLDSNTLLYVAGNQMVLLDFKDKTQIYLQSSSGQGIGAIGVHPKKTYFAVAEKGSFPKIIIYEYPSLKPYRILRDGAEKAYAYVDFNNEGNLLASVGCHPDYTITIWGWKEEQPILRTKAFSQDVFKVTFNPDNDEQLTTSGSGHIKFWEMAFTFTGLKLQGSLGRFGKTSTSDIEGYAELPDGKVLSGSEWGNLLLWEGSLIKVELCRTGMKSCHSGSINQIMLDEGEVITAGSDGSVRIWDFETIDTADVIDDTGLLEIEPINELHIDKSVNLFSMIKMNEVGNNFWLAQDANGAIWKLDLSFSNITQDPECLFSFHSGPIAALAVSPLTYLMATTAMDCSVRVYDFSSKNPLVHMKFKQGGTSLIWAPRSVSVSASQIVVGFQDGVVRVLELFDPKGLTVYAGRKKIPDAELHLKYVFKPHTDEVTALAYERDGDILATGSEDKTVFFFDVEKEYKPIGFFNTPGPICQLMWSPASHPEKTLLIICENGYILESLCPTIKDVDDQNVITFAIPNVFLRCFHFTSVKSKILRFLEVQRREQQKMLKEKEKLERRMKLAEEREAFGEEEIPEEETSEEGEEEEPPLPEIFMPPTPSPILCGFYSEPGKFWVSLGNYDAGFLYHCQFPSYLHNSDFQKQENEPFDFRVLENTEDNPIRNITFSNDQTMMFCGMTNGAIRVYVLSENDPFLVSLQHYWHFNVHDNNYGSIKSITSSFDDQYLLTAGEDGNIFVFDIFSEFIVPKGIKAKVPSPRFGIESEAAPEDIEDPKAYSIENARKKREHDKLMKKVEELKAHKREQIKILRNEFWKLLELNKELPAHMQFQRTDFNIDAKIHAEIHKKTSLKIEQVEKELAWEKQKHELGLKKLQDRFREPLESDTIVVYATQSDHQIASYRLVKPSKYSKLKRPSQSERRQSKMERLEKEGPGKKESQRDTGGSISLQEESVLEKGKKFRPRTLSEIMVENQIEKTKKLIQQAERAQFKILQRKKEWEELYKSKPDDDYEDPKDVQAIKEAQTYMGDFNLKTAPDYKIPEHMRINAAKKEEELGYLDTMAHGKKRYMNKCILSLRDLKLAVIEEIQCLVQELKNIQSSIPASKHMPIPQVPQIYPEEVPERRFQYDEETLLRFQRKQKKRQDKSSSKQSGTGSGGSAGGGLVGFLKLSSGKEGDLTTRDSLSRSSKASALLELPKPVEFEKAEPSDAELEIMKRDEVKHLYMQQFLCNRINELTVTFDAELHLLRHQKLKLDTKMKLSDLHHLTLFQEMLLLKNFEKQENILQERVNSLDKEEQDMQWKINETLKEMEEKKNEITKLQDQEKALYAGFQAALGENNKFANFLMKVLKKKIKRAKKKEVEGDADEDEESEESSEEESSLESDEDASGSEDDVFDDSICPTNCDVSLFELALQLREKRLDIEEALVEEKKIVDNLKKEYDTISKKVKVVATNLNAAEEALEAYQREKQQRLNELLVVIPLKLHQIEYMEFGEVPEDLSGTLVFSNHSLDRLQERIVQLQEENAKQQKLNKECRERRKLLIREKREMAKTISKMEETVRELMISKFGRVIDLEALQTLSVNTTLEELKIKKLRKELSNAKELRMWEEKIAQVRWDLMMKTKEHTKKLHQMNDLCLEKKKLDSRLNTLQNQQGNAFQGLRKADIVAKQKVTELVQTQLEKITALKEEIELLRKKGGLLLPPITPKPKNEMKPMDT.

Residues 1-86 (MKEPDDQDTS…PPVEVKEEPE (86 aa)) are disordered. Polar residues predominate over residues 29–39 (LKSSQDTTADS). A compositionally biased stretch (acidic residues) spans 41–58 (TDGEESYLGDDLDLDDMD). WD repeat units lie at residues 214 to 255 (GAEK…PILR), 258 to 297 (AFSQ…TGLK), 308 to 346 (TSTS…VELC), 353 to 390 (CHSG…TADV), 456 to 495 (FHSG…PLVH), 497 to 541 (KFKQ…GLTV), and 561 to 600 (PHTD…KPIG). Residues 701 to 726 (REAFGEEEIPEEETSEEGEEEEPPLP) form a disordered region. A compositionally biased stretch (acidic residues) spans 705–724 (GEEEIPEEETSEEGEEEEPP). WD repeat units lie at residues 790 to 829 (TEDN…PFLV) and 842 to 881 (NNYG…IVPK). Disordered regions lie at residues 1040–1086 (YSKL…SVLE), 1266–1291 (QRKQ…SAGG), and 1488–1524 (KEVE…DDVF). Residues 1047-1071 (SQSERRQSKMERLEKEGPGKKESQR) show a composition bias toward basic and acidic residues. The residue at position 1069 (Ser-1069) is a Phosphoserine. Residues 1072–1081 (DTGGSISLQE) are compositionally biased toward polar residues. Acidic residues predominate over residues 1492–1524 (GDADEDEESEESSEEESSLESDEDASGSEDDVF). Coiled-coil stretches lie at residues 1548–1603 (RLDI…RLNE) and 1631–1665 (LVFS…CRER). One copy of the WD 10 repeat lies at 1699-1744 (IDLEALQTLSVNTTLEELKIKKLRKELSNAKELRMWEEKIAQVRWD).

It belongs to the CFAP44 family. In terms of tissue distribution, expressed in testis.

It localises to the cell projection. It is found in the cilium. The protein localises to the flagellum. The protein resides in the cytoplasm. Its subcellular location is the cytoskeleton. It localises to the flagellum axoneme. Functionally, flagellar protein involved in sperm flagellum axoneme organization and function. This is Cilia- and flagella-associated protein 44 from Mus musculus (Mouse).